We begin with the raw amino-acid sequence, 337 residues long: MLALGKLLELTLAGHEPSAKIQLTPDGTRLRWLDEGALEITPPAARDNGLDLLLSAGIHGNETAPIELLDRLLRGIARNELHPAARILFLFGNPEAMRRGERFVEQDINRLFNGRHEQSSGFEAIRACDLEHLAATFFGKDTGRTRLHYDLHTAIRGSKIEQFALYPWHEGRTHSRRELQRLRAAGIEAVLLQNKGSITFSSYTYGQLGAEAFTLELGKARAFGQNQLVNLDLLENALQALIEGREVIDDEPTLDGLQLFAVSREIIKHSDSFQLHLPADIENFTELEPGYLLAEDIADTRWVVEEQNARIIFPNPKVKNGLRAGILIVPDDGAGLA.

Positions 59, 62, and 152 each coordinate Zn(2+). Glu-216 is a catalytic residue.

This sequence belongs to the AspA/AstE family. Succinylglutamate desuccinylase subfamily. It depends on Zn(2+) as a cofactor.

The catalysed reaction is N-succinyl-L-glutamate + H2O = L-glutamate + succinate. Its pathway is amino-acid degradation; L-arginine degradation via AST pathway; L-glutamate and succinate from L-arginine: step 5/5. Transforms N(2)-succinylglutamate into succinate and glutamate. This Ectopseudomonas mendocina (strain ymp) (Pseudomonas mendocina) protein is Succinylglutamate desuccinylase.